Consider the following 319-residue polypeptide: Geranylgeranyl pyrophosphate synthase (319 aa).

Isopentenyl diphosphate is bound by residues K42, R45, and H74. Mg(2+)-binding residues include D81 and D85. R90 contributes to the dimethylallyl diphosphate binding site. R91 contributes to the isopentenyl diphosphate binding site. Residues K172, T173, Q210, K226, and K236 each coordinate dimethylallyl diphosphate.

It belongs to the FPP/GGPP synthase family. Homodimer. Mg(2+) serves as cofactor.

It catalyses the reaction isopentenyl diphosphate + dimethylallyl diphosphate = (2E)-geranyl diphosphate + diphosphate. The enzyme catalyses isopentenyl diphosphate + (2E)-geranyl diphosphate = (2E,6E)-farnesyl diphosphate + diphosphate. It carries out the reaction isopentenyl diphosphate + (2E,6E)-farnesyl diphosphate = (2E,6E,10E)-geranylgeranyl diphosphate + diphosphate. It functions in the pathway isoprenoid biosynthesis; geranyl diphosphate biosynthesis; geranyl diphosphate from dimethylallyl diphosphate and isopentenyl diphosphate: step 1/1. Its pathway is isoprenoid biosynthesis; farnesyl diphosphate biosynthesis; farnesyl diphosphate from geranyl diphosphate and isopentenyl diphosphate: step 1/1. The protein operates within isoprenoid biosynthesis; geranylgeranyl diphosphate biosynthesis; geranylgeranyl diphosphate from farnesyl diphosphate and isopentenyl diphosphate: step 1/1. Functionally, catalyzes the addition of 3 molecules of isopentenyl diphosphate (IPP) onto dimethylallyl diphosphate (DMAPP) to form geranylgeranyl pyrophosphate (GGPP). Catalyzes the synthesis of geranylgeranyl pyrophosphate as a major product and of farnesyl pyrophosphate in smaller amounts. The protein is Geranylgeranyl pyrophosphate synthase of Geoglobus acetivorans.